Consider the following 331-residue polypeptide: Putative sigma L-dependent transcriptional regulator YplP (331 aa).

A Sigma-54 factor interaction domain is found at 12-213; the sequence is HLIGEHQTFL…LKNAADYMAA (202 aa). ATP is bound at residue 95-104; sequence AVRGTLFLDD.

Functionally, may play a role in cold adaptation. The chain is Putative sigma L-dependent transcriptional regulator YplP (yplP) from Bacillus subtilis (strain 168).